The chain runs to 294 residues: Nucleotide-binding protein Reut_A0350 (294 aa).

8–15 serves as a coordination point for ATP; that stretch reads GISGSGKS. 57–60 contributes to the GTP binding site; that stretch reads DIRS.

This sequence belongs to the RapZ-like family.

Functionally, displays ATPase and GTPase activities. This Cupriavidus pinatubonensis (strain JMP 134 / LMG 1197) (Cupriavidus necator (strain JMP 134)) protein is Nucleotide-binding protein Reut_A0350.